A 735-amino-acid polypeptide reads, in one-letter code: Coiled-coil quantitatively-enriched protein 1 (735 aa).

A coiled-coil region spans residues 514 to 719 (AAVQYLQRRL…TLKILEQKSL (206 aa)).

Interacts (during meiosis) with pcp1. Interacts with clr3, pot1, taz1 and tpz1.

It localises to the nucleus. It is found in the nucleoplasm. Its subcellular location is the chromosome. The protein localises to the telomere. Its function is as follows. Component of the meiotic bouquet that facilitates meiotic nuclear reorganization of the telomeres to the centrosome. Links telomeres to the meiotic centrosome component pcp1. Essential for the formation of normal telomere clusters during meiotic prophase. Required for telomere length regulation and chromosome segregation. Required for proper positioning of nucleosomes at heterochromatic loci and for transcriptional gene silencing (TGS) function of the Snf2/Hdac-containing repressor complex (SHREC). This is Coiled-coil quantitatively-enriched protein 1 (ccq1) from Schizosaccharomyces pombe (strain 972 / ATCC 24843) (Fission yeast).